The sequence spans 72 residues: Translation initiation factor IF-1 (72 aa).

An S1-like domain is found at 1–72 (MAKEDVIEIE…TRGRITYRFK (72 aa)).

This sequence belongs to the IF-1 family. In terms of assembly, component of the 30S ribosomal translation pre-initiation complex which assembles on the 30S ribosome in the order IF-2 and IF-3, IF-1 and N-formylmethionyl-tRNA(fMet); mRNA recruitment can occur at any time during PIC assembly.

The protein resides in the cytoplasm. Functionally, one of the essential components for the initiation of protein synthesis. Stabilizes the binding of IF-2 and IF-3 on the 30S subunit to which N-formylmethionyl-tRNA(fMet) subsequently binds. Helps modulate mRNA selection, yielding the 30S pre-initiation complex (PIC). Upon addition of the 50S ribosomal subunit IF-1, IF-2 and IF-3 are released leaving the mature 70S translation initiation complex. The protein is Translation initiation factor IF-1 of Streptococcus mutans serotype c (strain ATCC 700610 / UA159).